The chain runs to 260 residues: Acyl-[acyl-carrier-protein]--UDP-N-acetylglucosamine O-acyltransferase (260 aa).

It belongs to the transferase hexapeptide repeat family. LpxA subfamily. In terms of assembly, homotrimer.

It localises to the cytoplasm. The catalysed reaction is a (3R)-hydroxyacyl-[ACP] + UDP-N-acetyl-alpha-D-glucosamine = a UDP-3-O-[(3R)-3-hydroxyacyl]-N-acetyl-alpha-D-glucosamine + holo-[ACP]. The protein operates within glycolipid biosynthesis; lipid IV(A) biosynthesis; lipid IV(A) from (3R)-3-hydroxytetradecanoyl-[acyl-carrier-protein] and UDP-N-acetyl-alpha-D-glucosamine: step 1/6. Functionally, involved in the biosynthesis of lipid A, a phosphorylated glycolipid that anchors the lipopolysaccharide to the outer membrane of the cell. The protein is Acyl-[acyl-carrier-protein]--UDP-N-acetylglucosamine O-acyltransferase of Sulfurovum sp. (strain NBC37-1).